The sequence spans 157 residues: Small ribosomal subunit protein uS7 (157 aa).

Belongs to the universal ribosomal protein uS7 family. In terms of assembly, part of the 30S ribosomal subunit. Contacts proteins S9 and S11.

One of the primary rRNA binding proteins, it binds directly to 16S rRNA where it nucleates assembly of the head domain of the 30S subunit. Is located at the subunit interface close to the decoding center, probably blocks exit of the E-site tRNA. This is Small ribosomal subunit protein uS7 from Delftia acidovorans (strain DSM 14801 / SPH-1).